The primary structure comprises 133 residues: Large ribosomal subunit protein uL16 (133 aa).

The protein belongs to the universal ribosomal protein uL16 family. As to quaternary structure, part of the 50S ribosomal subunit.

In terms of biological role, binds 23S rRNA and is also seen to make contacts with the A and possibly P site tRNAs. This is Large ribosomal subunit protein uL16 from Blochmanniella floridana.